We begin with the raw amino-acid sequence, 266 residues long: MRSLAVVVAVVATVAMAIGTAHGSVSSIISHAQFDRMLLHRNDGACQAKGFYTYDAFVAAANAFPGFGATGSTDARKRDVAAFLAQTSHETTGGWATAPDGAFAWGYCFKQERGAAADYCTPSAQWPCAPGKRYYGRGPIQLSHNYNYGPAGRAIGVDLLRNPDLVATDPTVSFKTALWFWMTAQAPKPSSHAVITGKWSPSGADRAAGRAPGFGVITNIINGGLECGHGQDSRVADRIGFYKRYCDILGVGYGDNLDCYNQRPFA.

Positions 1-23 (MRSLAVVVAVVATVAMAIGTAHG) are cleaved as a signal peptide. Intrachain disulfides connect Cys-46/Cys-108, Cys-120/Cys-128, and Cys-246/Cys-259. Glu-90 functions as the Proton donor in the catalytic mechanism.

This sequence belongs to the glycosyl hydrolase 19 family. Chitinase class II subfamily. As to expression, localized to the starchy endoderm of the seed May localize to other parts of the seed including the aleurone cells (at protein level).

It carries out the reaction Random endo-hydrolysis of N-acetyl-beta-D-glucosaminide (1-&gt;4)-beta-linkages in chitin and chitodextrins.. Functionally, defense against chitin-containing fungal pathogens. Binds the hyphal tips of fungi and degrades nascent chitin. This Secale cereale (Rye) protein is Basic endochitinase C.